A 339-amino-acid chain; its full sequence is MRVYYDRDADLNLIKSKKVAIIGYGSQGRAHALNLKDSGAKDLAVALRPGSASAKKAEADGLKVMSVAEAAGWADLMMMATPDELQAGIYNNEIAPNIRDGAAIAFAHGLNVHFGLIEPKKTVDVLMIAPKGPGHTVRSEYQRGGGVPCLVAVHHDASGNALDLALSYACGVGGGRSGIIETTFREECETDLFGEQVVLCGGLVELIRAGFETLVEAGYAPEMAYFECLHEVKLIVDLIYEGGIANMNYSISNTAEWGEYVSGPRIITPETKAEMKRVLKDIQTGKFTAEWMQEWHSGAARFKATRRLNDSHQIEEVGEKLRAMMPWISKNKLVDKAKN.

Residues 1-182 (MRVYYDRDAD…GGGRSGIIET (182 aa)) enclose the KARI N-terminal Rossmann domain. NADP(+) is bound by residues 24-27 (YGSQ), Arg-48, Ser-51, Ser-53, and 83-86 (DELQ). The active site involves His-108. Gly-134 is an NADP(+) binding site. Residues 183–328 (TFREECETDL…EKLRAMMPWI (146 aa)) enclose the KARI C-terminal knotted domain. Residues Asp-191, Glu-195, Glu-227, and Glu-231 each contribute to the Mg(2+) site. A substrate-binding site is contributed by Ser-252.

This sequence belongs to the ketol-acid reductoisomerase family. The cofactor is Mg(2+).

It carries out the reaction (2R)-2,3-dihydroxy-3-methylbutanoate + NADP(+) = (2S)-2-acetolactate + NADPH + H(+). It catalyses the reaction (2R,3R)-2,3-dihydroxy-3-methylpentanoate + NADP(+) = (S)-2-ethyl-2-hydroxy-3-oxobutanoate + NADPH + H(+). It participates in amino-acid biosynthesis; L-isoleucine biosynthesis; L-isoleucine from 2-oxobutanoate: step 2/4. It functions in the pathway amino-acid biosynthesis; L-valine biosynthesis; L-valine from pyruvate: step 2/4. Functionally, involved in the biosynthesis of branched-chain amino acids (BCAA). Catalyzes an alkyl-migration followed by a ketol-acid reduction of (S)-2-acetolactate (S2AL) to yield (R)-2,3-dihydroxy-isovalerate. In the isomerase reaction, S2AL is rearranged via a Mg-dependent methyl migration to produce 3-hydroxy-3-methyl-2-ketobutyrate (HMKB). In the reductase reaction, this 2-ketoacid undergoes a metal-dependent reduction by NADPH to yield (R)-2,3-dihydroxy-isovalerate. This Chelativorans sp. (strain BNC1) protein is Ketol-acid reductoisomerase (NADP(+)).